The following is a 124-amino-acid chain: Protein Rev (124 aa).

Ser5 bears the Phosphoserine; by host CK2 mark. Positions 19–27 (IIKILYQSN) are homomultimerization. The tract at residues 25 to 51 (QSNPYPSPEGTRKARRNRRRRWRARQK) is disordered. Residues 35-51 (TRKARRNRRRRWRARQK) carry the Nuclear localization signal and RNA-binding (RRE) motif. Over residues 37–50 (KARRNRRRRWRARQ) the composition is skewed to basic residues. A Nuclear export signal and binding to XPO1 motif is present at residues 74 to 85 (LELPELDKLSLQ). The span at 90–106 (TQDVGTSNTSQPQTATG) shows a compositional bias: polar residues. Residues 90–124 (TQDVGTSNTSQPQTATGETVPAGGNYSILGKGAKN) form a disordered region.

The protein belongs to the HIV-1 REV protein family. In terms of assembly, homomultimer; when bound to the RRE. Multimeric assembly is essential for activity and may involve XPO1. Binds to human KPNB1, XPO1, TNPO1, RANBP5 and IPO7. Interacts with the viral Integrase. Interacts with human KHDRBS1. Interacts with human NAP1; this interaction decreases Rev multimerization and stimulates its activity. Interacts with human DEAD-box helicases DDX3 and DDX24; these interactions may serve for viral RNA export to the cytoplasm and packaging, respectively. Interacts with human PSIP1; this interaction may inhibit HIV-1 DNA integration by promoting dissociation of the Integrase-LEDGF/p75 complex. In terms of processing, asymmetrically arginine dimethylated at one site by host PRMT6. Methylation impairs the RNA-binding activity and export of viral RNA from the nucleus to the cytoplasm. Phosphorylated by protein kinase CK2. Presence of, and maybe binding to the N-terminus of the regulatory beta subunit of CK2 is necessary for CK2-mediated Rev's phosphorylation.

Its subcellular location is the host nucleus. It localises to the host nucleolus. It is found in the host cytoplasm. Functionally, escorts unspliced or incompletely spliced viral pre-mRNAs (late transcripts) out of the nucleus of infected cells. These pre-mRNAs carry a recognition sequence called Rev responsive element (RRE) located in the env gene, that is not present in fully spliced viral mRNAs (early transcripts). This function is essential since most viral proteins are translated from unspliced or partially spliced pre-mRNAs which cannot exit the nucleus by the pathway used by fully processed cellular mRNAs. Rev itself is translated from a fully spliced mRNA that readily exits the nucleus. Rev's nuclear localization signal (NLS) binds directly to KPNB1/Importin beta-1 without previous binding to KPNA1/Importin alpha-1. KPNB1 binds to the GDP bound form of RAN (Ran-GDP) and targets Rev to the nucleus. In the nucleus, the conversion from Ran-GDP to Ran-GTP dissociates Rev from KPNB1 and allows Rev's binding to the RRE in viral pre-mRNAs. Rev multimerization on the RRE via cooperative assembly exposes its nuclear export signal (NES) to the surface. Rev can then form a complex with XPO1/CRM1 and Ran-GTP, leading to nuclear export of the complex. Conversion from Ran-GTP to Ran-GDP mediates dissociation of the Rev/RRE/XPO1/RAN complex, so that Rev can return to the nucleus for a subsequent round of export. Beside KPNB1, also seems to interact with TNPO1/Transportin-1, RANBP5/IPO5 and IPO7/RANBP7 for nuclear import. The nucleoporin-like HRB/RIP is an essential cofactor that probably indirectly interacts with Rev to release HIV RNAs from the perinuclear region to the cytoplasm. In Pan (chimpanzees), this protein is Protein Rev.